The following is a 234-amino-acid chain: uncharacterized protein (234 aa).

Helical transmembrane passes span 25–45 (LMGA…TFFL), 57–77 (LFFL…QGLA), 85–105 (LPIF…TLLM), 108–128 (ATDI…LSVY), 142–162 (AFGV…FFAS), 163–183 (TGLT…LIAW), and 203–223 (WAIS…LFLL).

This sequence belongs to the BI1 family.

It is found in the cell membrane. This is an uncharacterized protein from Lactococcus lactis subsp. lactis (strain IL1403) (Streptococcus lactis).